The primary structure comprises 766 residues: Transcription factor GTE4 (766 aa).

Disordered regions lie at residues 87 to 108 (GTNS…PGDD), 234 to 262 (RDTT…PMEE), and 388 to 412 (GDKL…GDVG). Positions 238–250 (DAQQPAGLTSDSA) are enriched in polar residues. The Bromo domain maps to 416–522 (GAGTKVFKNC…QIFEERWAVI (107 aa)). Disordered stretches follow at residues 544-606 (TMRS…NKRD) and 687-766 (ARAE…SDQT). Over residues 574-589 (PTTTPGRTPTSATPSG) the composition is skewed to low complexity. The NET domain maps to 597–678 (PKANEPNKRD…NYKKGLSKKK (82 aa)). The segment covering 736 to 766 (SRSSSSSSSSSSSSSSDSDSDSSSSSGSDQT) has biased composition (low complexity).

As to expression, ubiquitously expressed.

It is found in the nucleus. Its function is as follows. Involved in the activation and maintenance of cell division in the meristems and by this controls cell numbers in differentiated organs. Its action in cell cycle regulation may be directed through the RB-E2F pathway. The chain is Transcription factor GTE4 (GTE4) from Arabidopsis thaliana (Mouse-ear cress).